Reading from the N-terminus, the 1454-residue chain is ABC transporter G family member 39 (1454 aa).

The region spanning 175–448 is the ABC transporter 1 domain; it reads LGFFHLLPSK…FEYFGFQCPE (274 aa). 208–215 serves as a coordination point for ATP; it reads GPPSSGKT. In terms of domain architecture, ABC transmembrane type-2 1 spans 526-739; sequence ELFKACFDRE…GQTAIVMNEF (214 aa). A run of 7 helical transmembrane segments spans residues 544–564, 584–604, 623–643, 663–683, 689–709, 716–736, and 775–795; these read FVYV…MTVY, MFFS…FTVM, FALP…GIWI, LLAY…LGAI, ISNS…GFII, PWMT…AIVM, and FWIC…FYIL. Residues 812-824 are compositionally biased toward basic and acidic residues; it reads EEGKDKQKGENRG. The segment at 812–838 is disordered; that stretch reads EEGKDKQKGENRGTEGSVVELNSSSNK. An ABC transporter 2 domain is found at 853-1106; sequence LAFNNVNYYV…LVEYFEAVEG (254 aa). Residue 898-905 participates in ATP binding; it reads GVSGAGKT. The ABC transmembrane type-2 2 domain maps to 1178 to 1392; that stretch reads TQTKACFWKQ…TLYGLITSQV (215 aa). The next 7 membrane-spanning stretches (helical) occupy residues 1199–1219, 1231–1251, 1285–1303, 1312–1332, 1342–1362, 1367–1387, and 1423–1443; these read AIRF…FWQI, NFFG…AATV, IMYN…YSMI, FLWF…YGMM, IAGI…GFLI, IPIW…LYGL, and FLPV…FVFA.

Belongs to the ABC transporter superfamily. ABCG family. PDR (TC 3.A.1.205) subfamily.

Its subcellular location is the membrane. Functionally, may be a general defense protein. This Arabidopsis thaliana (Mouse-ear cress) protein is ABC transporter G family member 39 (ABCG39).